A 29-amino-acid polypeptide reads, in one-letter code: Myosin heavy chain, muscle (29 aa).

The segment covering 1–16 (SKYESEGVARSEELQE) has biased composition (basic and acidic residues). Residues 1–29 (SKYESEGVARSEELQEVHQAFADAGRKPI) are disordered.

As to quaternary structure, muscle myosin is a hexameric protein that consists of 2 heavy chain subunits (MHC), 2 alkali light chain subunits (MLC) and 2 regulatory light chain subunits (MLC-2).

It is found in the cytoplasm. Its subcellular location is the myofibril. Functionally, muscle contraction. This is Myosin heavy chain, muscle from Bombyx mori (Silk moth).